The primary structure comprises 432 residues: Adenylosuccinate synthetase (432 aa).

Residues 12–18 (GDEGKGK) and 40–42 (GHT) each bind GTP. Residue D13 is the Proton acceptor of the active site. Positions 13 and 40 each coordinate Mg(2+). Residues 13 to 16 (DEGK), 38 to 41 (NAGH), T129, R143, Q224, T239, and R303 each bind IMP. H41 acts as the Proton donor in catalysis. Substrate is bound at residue 299-305 (VTTGRRR). Residues R305, 331 to 333 (KLD), and 413 to 415 (GVG) contribute to the GTP site.

Belongs to the adenylosuccinate synthetase family. As to quaternary structure, homodimer. Mg(2+) serves as cofactor.

It localises to the cytoplasm. It carries out the reaction IMP + L-aspartate + GTP = N(6)-(1,2-dicarboxyethyl)-AMP + GDP + phosphate + 2 H(+). The protein operates within purine metabolism; AMP biosynthesis via de novo pathway; AMP from IMP: step 1/2. Functionally, plays an important role in the de novo pathway of purine nucleotide biosynthesis. Catalyzes the first committed step in the biosynthesis of AMP from IMP. This chain is Adenylosuccinate synthetase, found in Mycobacterium leprae (strain TN).